We begin with the raw amino-acid sequence, 268 residues long: Fibroblast growth factor 5 (268 aa).

The N-terminal stretch at 1–20 is a signal peptide; sequence MSLSFLLLLFFSHLILSAWA. The tract at residues 26-81 is disordered; that stretch reads LAPKGQPGPAATDRNPRGSSSRQSSSSAMSSSSASSSPAASLGSQGSGLEQSSFQW. Low complexity predominate over residues 43–80; it reads GSSSRQSSSSAMSSSSASSSPAASLGSQGSGLEQSSFQ. Residue Asn110 is glycosylated (N-linked (GlcNAc...) asparagine). The tract at residues 233–255 is disordered; that stretch reads VPEKKKPPSPIKPKIPLSAPRKN.

Belongs to the heparin-binding growth factors family. Interacts with FGFR1 and FGFR2. Affinity between fibroblast growth factors (FGFs) and their receptors is increased by heparan sulfate glycosaminoglycans that function as coreceptors. Expressed in neonatal brain.

The protein resides in the secreted. Plays an important role in the regulation of cell proliferation and cell differentiation. Required for normal regulation of the hair growth cycle. Functions as an inhibitor of hair elongation by promoting progression from anagen, the growth phase of the hair follicle, into catagen the apoptosis-induced regression phase. This is Fibroblast growth factor 5 (FGF5) from Homo sapiens (Human).